The sequence spans 167 residues: 3-dehydroquinate dehydratase (167 aa).

Residue tyrosine 22 is the Proton acceptor of the active site. Residues asparagine 76, histidine 82, and aspartate 89 each coordinate substrate. The active-site Proton donor is histidine 102. Substrate contacts are provided by residues 103–104 (LT) and arginine 113.

It belongs to the type-II 3-dehydroquinase family. In terms of assembly, homododecamer.

The catalysed reaction is 3-dehydroquinate = 3-dehydroshikimate + H2O. The protein operates within metabolic intermediate biosynthesis; chorismate biosynthesis; chorismate from D-erythrose 4-phosphate and phosphoenolpyruvate: step 3/7. Its function is as follows. Catalyzes a trans-dehydration via an enolate intermediate. In Helicobacter pylori (strain P12), this protein is 3-dehydroquinate dehydratase.